The chain runs to 309 residues: Mitochondrial import receptor subunit TOM34 (309 aa).

Phosphoserine is present on Ser-8. 3 TPR repeats span residues 9-42 (VEEL…LQAQ), 51-84 (SVLY…VPFS), and 86-118 (KPLL…DDNV). Position 160 is a phosphoserine (Ser-160). The tract at residues 161 to 189 (LPSENHKEMAKSKSKETTATKNRVPSAGD) is disordered. Residues 164–178 (ENHKEMAKSKSKETT) show a composition bias toward basic and acidic residues. At Ser-186 the chain carries Phosphoserine. 3 TPR repeats span residues 193–226 (ARVL…SNLE), 227–260 (SATY…DGKN), and 262–294 (KAFY…EPRN). Lys-197 participates in a covalent cross-link: Glycyl lysine isopeptide (Lys-Gly) (interchain with G-Cter in SUMO2).

It belongs to the Tom34 family. In terms of assembly, interacts with HSP90A, VCP, ATP6V1D, KIAA0665, AMPK, and DMAP1 through its TPR repeat. Ubiquitous.

The protein localises to the cytoplasm. Its subcellular location is the mitochondrion outer membrane. In terms of biological role, plays a role in the import of cytosolically synthesized preproteins into mitochondria. Binds the mature portion of precursor proteins. Interacts with cellular components, and possesses weak ATPase activity. May be a chaperone-like protein that helps to keep newly synthesized precursors in an unfolded import compatible state. The protein is Mitochondrial import receptor subunit TOM34 (TOMM34) of Homo sapiens (Human).